The chain runs to 471 residues: P2X purinoceptor 2 (471 aa).

Residues 1 to 42 (MAAAQPKYPAGATARRLARGCWSALWDYETPKVIVVRNRRLG) are Cytoplasmic-facing. Disulfide bonds link cysteine 21–cysteine 439, cysteine 125–cysteine 176, cysteine 136–cysteine 159, cysteine 142–cysteine 170, cysteine 226–cysteine 236, and cysteine 270–cysteine 279. Residues 43–63 (VLYRAVQLLILLYFVWYVFIV) traverse the membrane as a helical segment. Over 64–337 (QKSYQESETG…IVHGQAGKFS (274 aa)) the chain is Extracellular. Positions 81 and 83 each coordinate ATP. An N-linked (GlcNAc...) asparagine glycan is attached at asparagine 133. N-linked (GlcNAc...) asparagine glycosylation occurs at asparagine 194. Residue threonine 196 coordinates ATP. Residues serine 296, asparagine 300, and arginine 302 each contribute to the ATP site. Asparagine 310 carries an N-linked (GlcNAc...) asparagine glycan. Lysine 319 is a binding site for ATP. A pore-forming motif region spans residues 320–333 (AYGIRIDVIVHGQA). A helical transmembrane segment spans residues 338 to 358 (LIPTIINLATALTSVGVGSFL). The Cytoplasmic portion of the chain corresponds to 359 to 471 (CDWILLTFMN…PTDPKGLAQL (113 aa)). A disordered region spans residues 400-471 (GQAPPEPGHR…PTDPKGLAQL (72 aa)).

The protein belongs to the P2X receptor family. In terms of assembly, homotrimer and heterotrimer; functional P2XRs are organized as homomeric and heteromeric trimers. Homotrimer. Forms heterotrimer with P2RX1. Forms heterotrimer with P2RX6. Forms heterotrimer with P2RX3. As to expression, expressed in both the central and peripheral nervous system, as well as in the pituitary gland.

The protein localises to the cell membrane. It carries out the reaction Ca(2+)(in) = Ca(2+)(out). The enzyme catalyses K(+)(in) = K(+)(out). The catalysed reaction is Na(+)(in) = Na(+)(out). With respect to regulation, fast activation by external ATP. Exhibits slow desensitization during prolonged ATP activation. Not sensitive to the ATP agonist:alpha/beta-methylene-ATP. Its function is as follows. ATP-gated nonselective transmembrane cation channel permeable to potassium, sodium and calcium. Activation by extracellular ATP induces a variety of cellular responses, such as excitatory postsynaptic responses in sensory neurons, neuromuscular junctions (NMJ) formation, hearing, perception of taste and peristalsis. In the inner ear, regulates sound transduction and auditory neurotransmission, outer hair cell electromotility, inner ear gap junctions, and K(+) recycling. Mediates synaptic transmission between neurons and from neurons to smooth muscle. The sequence is that of P2X purinoceptor 2 from Homo sapiens (Human).